The following is a 578-amino-acid chain: Arginine--tRNA ligase (578 aa).

The short motif at 127-137 (PNLAKEMHVGH) is the 'HIGH' region element.

The protein belongs to the class-I aminoacyl-tRNA synthetase family. As to quaternary structure, monomer.

Its subcellular location is the cytoplasm. The catalysed reaction is tRNA(Arg) + L-arginine + ATP = L-arginyl-tRNA(Arg) + AMP + diphosphate. The polypeptide is Arginine--tRNA ligase (Pseudomonas entomophila (strain L48)).